We begin with the raw amino-acid sequence, 338 residues long: Ornithine carbamoyltransferase (338 aa).

Carbamoyl phosphate contacts are provided by residues Arg116 and 143-146 (HPCQ). L-ornithine contacts are provided by residues Asn174, Asp235, and 239–240 (SM). Carbamoyl phosphate is bound by residues Cys275 and Arg303.

It belongs to the aspartate/ornithine carbamoyltransferase superfamily. OTCase family.

The protein resides in the cytoplasm. It carries out the reaction carbamoyl phosphate + L-ornithine = L-citrulline + phosphate + H(+). It participates in amino-acid biosynthesis; L-arginine biosynthesis; L-arginine from L-ornithine and carbamoyl phosphate: step 1/3. In terms of biological role, reversibly catalyzes the transfer of the carbamoyl group from carbamoyl phosphate (CP) to the N(epsilon) atom of ornithine (ORN) to produce L-citrulline. In Chlorobaculum tepidum (strain ATCC 49652 / DSM 12025 / NBRC 103806 / TLS) (Chlorobium tepidum), this protein is Ornithine carbamoyltransferase.